A 393-amino-acid polypeptide reads, in one-letter code: Branched-chain-amino-acid aminotransferase, mitochondrial (393 aa).

The N-terminal 27 residues, 1-27 (MATAALRQIWIPRFLPVPWFLCGSRRY), are a transit peptide targeting the mitochondrion. Tyr169 is a substrate binding site. The residue at position 230 (Lys230) is an N6-(pyridoxal phosphate)lysine. An N6-acetyllysine modification is found at Lys322.

This sequence belongs to the class-IV pyridoxal-phosphate-dependent aminotransferase family. As to quaternary structure, homodimer. Pyridoxal 5'-phosphate is required as a cofactor.

The protein localises to the mitochondrion. It carries out the reaction L-leucine + 2-oxoglutarate = 4-methyl-2-oxopentanoate + L-glutamate. It catalyses the reaction L-isoleucine + 2-oxoglutarate = (S)-3-methyl-2-oxopentanoate + L-glutamate. The enzyme catalyses L-valine + 2-oxoglutarate = 3-methyl-2-oxobutanoate + L-glutamate. Catalyzes the first reaction in the catabolism of the essential branched chain amino acids leucine, isoleucine, and valine. May also function as a transporter of branched chain alpha-keto acids. The polypeptide is Branched-chain-amino-acid aminotransferase, mitochondrial (BCAT2) (Bos taurus (Bovine)).